Consider the following 588-residue polypeptide: 2-isopropylmalate synthase (588 aa).

One can recognise a Pyruvate carboxyltransferase domain in the interval Pro-40–Asp-314. Residues Asp-49, His-253, His-255, and Asn-289 each coordinate Mg(2+). Residues Ala-456–Val-588 form a regulatory domain region.

Belongs to the alpha-IPM synthase/homocitrate synthase family. LeuA type 2 subfamily. Homodimer. Mg(2+) serves as cofactor.

Its subcellular location is the cytoplasm. The enzyme catalyses 3-methyl-2-oxobutanoate + acetyl-CoA + H2O = (2S)-2-isopropylmalate + CoA + H(+). It functions in the pathway amino-acid biosynthesis; L-leucine biosynthesis; L-leucine from 3-methyl-2-oxobutanoate: step 1/4. Catalyzes the condensation of the acetyl group of acetyl-CoA with 3-methyl-2-oxobutanoate (2-ketoisovalerate) to form 3-carboxy-3-hydroxy-4-methylpentanoate (2-isopropylmalate). The protein is 2-isopropylmalate synthase of Clavibacter michiganensis subsp. michiganensis (strain NCPPB 382).